Reading from the N-terminus, the 316-residue chain is Ribosomal RNA small subunit methyltransferase H (316 aa).

Residues 35–37 (SGH), Asp55, Phe84, Asp105, and Gln112 contribute to the S-adenosyl-L-methionine site.

The protein belongs to the methyltransferase superfamily. RsmH family.

It localises to the cytoplasm. It carries out the reaction cytidine(1402) in 16S rRNA + S-adenosyl-L-methionine = N(4)-methylcytidine(1402) in 16S rRNA + S-adenosyl-L-homocysteine + H(+). Its function is as follows. Specifically methylates the N4 position of cytidine in position 1402 (C1402) of 16S rRNA. The chain is Ribosomal RNA small subunit methyltransferase H from Streptococcus equi subsp. equi (strain 4047).